The chain runs to 41 residues: Large ribosomal subunit protein bL36 (41 aa).

This sequence belongs to the bacterial ribosomal protein bL36 family.

The protein is Large ribosomal subunit protein bL36 of Bartonella tribocorum (strain CIP 105476 / IBS 506).